A 306-amino-acid chain; its full sequence is Putative lipid kinase Sca_1050 (306 aa).

The DAGKc domain occupies 3-139 (QHFHRGILFY…FDVLKVNDTY (137 aa)). ATP contacts are provided by residues serine 44, 74–80 (GDGTVNE), and threonine 101. 3 residues coordinate Mg(2+): serine 220, aspartate 223, and glutamate 225. The Proton acceptor role is filled by glutamate 281.

It belongs to the diacylglycerol/lipid kinase family. It depends on Mg(2+) as a cofactor.

May catalyze the ATP-dependent phosphorylation of lipids other than diacylglycerol (DAG). The chain is Putative lipid kinase Sca_1050 from Staphylococcus carnosus (strain TM300).